A 458-amino-acid chain; its full sequence is UDP-N-acetylmuramate--L-alanine ligase (458 aa).

115–121 (GSHGKTT) lines the ATP pocket.

Belongs to the MurCDEF family.

It localises to the cytoplasm. It carries out the reaction UDP-N-acetyl-alpha-D-muramate + L-alanine + ATP = UDP-N-acetyl-alpha-D-muramoyl-L-alanine + ADP + phosphate + H(+). Its pathway is cell wall biogenesis; peptidoglycan biosynthesis. In terms of biological role, cell wall formation. The protein is UDP-N-acetylmuramate--L-alanine ligase of Anaeromyxobacter dehalogenans (strain 2CP-1 / ATCC BAA-258).